The following is an 89-amino-acid chain: NADH-ubiquinone oxidoreductase chain 4L (89 aa).

3 helical membrane-spanning segments follow: residues 1 to 21 (MSLT…NRKN), 22 to 42 (IILM…LILV), and 57 to 77 (IYII…LVAF).

This sequence belongs to the complex I subunit 4L family.

The protein localises to the mitochondrion membrane. It catalyses the reaction a ubiquinone + NADH + 5 H(+)(in) = a ubiquinol + NAD(+) + 4 H(+)(out). Functionally, core subunit of the mitochondrial membrane respiratory chain NADH dehydrogenase (Complex I) that is believed to belong to the minimal assembly required for catalysis. Complex I functions in the transfer of electrons from NADH to the respiratory chain. The immediate electron acceptor for the enzyme is believed to be ubiquinone. The sequence is that of NADH-ubiquinone oxidoreductase chain 4L (ND4L) from Hypocrea jecorina (Trichoderma reesei).